The primary structure comprises 370 residues: D-alanine--D-alanine ligase (370 aa).

One can recognise an ATP-grasp domain in the interval 144 to 352; that stretch reads KKIFADAGIP…YSALIERLVD (209 aa). Residue 177-232 participates in ATP binding; that stretch reads EEVLTYPVFVKPANLGSSVGISKATNKKELEDAMTEAFLYDRRVVVEQGVVAREIE. Mg(2+)-binding residues include Asp306, Glu319, and Asn321.

It belongs to the D-alanine--D-alanine ligase family. It depends on Mg(2+) as a cofactor. Mn(2+) is required as a cofactor.

Its subcellular location is the cytoplasm. The enzyme catalyses 2 D-alanine + ATP = D-alanyl-D-alanine + ADP + phosphate + H(+). Its pathway is cell wall biogenesis; peptidoglycan biosynthesis. Cell wall formation. The sequence is that of D-alanine--D-alanine ligase from Listeria welshimeri serovar 6b (strain ATCC 35897 / DSM 20650 / CCUG 15529 / CIP 8149 / NCTC 11857 / SLCC 5334 / V8).